The chain runs to 591 residues: CTP synthase 1-B (591 aa).

Residues 300 to 554 (SIALVGKYTK…LASVGRLSQY (255 aa)) form the Glutamine amidotransferase type-1 domain. Residues Cys-399, His-526, and Glu-528 each act as for GATase activity in the active site. A compositionally biased stretch (basic and acidic residues) spans 562–572 (SPRDTYSDRSE). Positions 562–581 (SPRDTYSDRSENSSPDAEIA) are disordered.

Belongs to the CTP synthase family.

The catalysed reaction is UTP + L-glutamine + ATP + H2O = CTP + L-glutamate + ADP + phosphate + 2 H(+). The protein operates within pyrimidine metabolism; CTP biosynthesis via de novo pathway; CTP from UDP: step 2/2. Its function is as follows. This enzyme is involved in the de novo synthesis of CTP, a precursor of DNA, RNA and phospholipids. Catalyzes the ATP-dependent amination of UTP to CTP with either L-glutamine or ammonia as a source of nitrogen. This is CTP synthase 1-B (ctps1-b) from Xenopus laevis (African clawed frog).